A 545-amino-acid polypeptide reads, in one-letter code: MVSLLRCQSFKPSSSLICSLALSAAFALSSSAFAEETKPAENKPATPVVSPPKATAQPANKNQVRFTKTGTFDGDSVVKLARKLASKPYVVLKDPLPAGLAKLSYDEYRDIRFNPVSSIWRDQGLPFQMQMFHRGFYFQDLIEIAIVEANQATHLAYEPKYFTAGEVITQALPNDDIGYSGFRIHNQLNTNGVYDELMVFQGASYFRALGKGNSYGLSARGLALKTADPEGEEFPIFRAFWVERPSYDSNLIVVHALLDSPSVAGAYRFSVRPGDNTQIDVEATLFPRVELSKVGLAPSTSMFLHSLNGRHDTDDFRPEVHDSDGLLMFNGRGEHLWRPLANPRQLQVSAFSDNSPQGFGLIQRERNYASYQDLEAHYERRPSLWIEPVGNWGQGAVVLTEIPTESEIHDNIVSFWKPRQPIPAGSEYHFAYRMNWGDEPVAKTNSVVVSRTASGRADIAKATPRRLFVVDYHLNGAMPDELPLAKVESSGGVIANVVIARNAANNGYRLAFELEPEDKDLIELRAELKFSTPRQVETWLYRWTL.

The first 34 residues, 1 to 34 (MVSLLRCQSFKPSSSLICSLALSAAFALSSSAFA), serve as a signal peptide directing secretion. Residues 38–60 (KPAENKPATPVVSPPKATAQPAN) are disordered.

Belongs to the OpgD/OpgG family.

The protein resides in the periplasm. It functions in the pathway glycan metabolism; osmoregulated periplasmic glucan (OPG) biosynthesis. Functionally, involved in the biosynthesis of osmoregulated periplasmic glucans (OPGs). The protein is Glucans biosynthesis protein G of Shewanella sp. (strain MR-7).